The sequence spans 540 residues: Arylsulfatase K (540 aa).

A signal peptide spans 1 to 22 (MLLLWVSVVAASALAAPAPGAD). Asp-44 and Cys-84 together coordinate Ca(2+). Residue Cys-84 is the Nucleophile of the active site. Cys-84 carries the post-translational modification 3-oxoalanine (Cys). N-linked (GlcNAc...) asparagine glycosylation occurs at Asn-112. A substrate-binding site is contributed by Lys-132. N-linked (GlcNAc...) asparagine glycosylation occurs at Asn-197. His-255 is a binding site for substrate. A glycan (N-linked (GlcNAc...) asparagine) is linked at Asn-266. Residues Asp-317 and His-318 each coordinate Ca(2+). N-linked (GlcNAc...) asparagine glycosylation is found at Asn-379, Asn-417, and Asn-502.

It belongs to the sulfatase family. Ca(2+) is required as a cofactor. In terms of processing, the conversion to 3-oxoalanine (also known as C-formylglycine, FGly), of a serine or cysteine residue in prokaryotes and of a cysteine residue in eukaryotes, is critical for catalytic activity. The 75-kDa precursor undergoes proteolytic processing to yield a 23 kDa form. Post-translationally, N-glycosylated with both high mannose and complex type sugars.

The protein localises to the secreted. It is found in the lysosome. It catalyses the reaction an aryl sulfate + H2O = a phenol + sulfate + H(+). It carries out the reaction Hydrolysis of the 2-sulfate groups of the 2-O-sulfo-D-glucuronate residues of chondroitin sulfate, heparin and heparitin sulfate.. In terms of biological role, catalyzes the hydrolysis of pseudosubstrates such as p-nitrocatechol sulfate and p-nitrophenyl sulfate. Catalyzes the hydrolysis of the 2-sulfate groups of the 2-O-sulfo-D-glucuronate residues of chondroitin sulfate, heparin and heparitin sulfate. Acts selectively on 2-sulfoglucuronate and lacks activity against 2-sulfoiduronate. This Bos taurus (Bovine) protein is Arylsulfatase K (ARSK).